Consider the following 229-residue polypeptide: ACD11 homolog protein (229 aa).

An N-acylsphingoid base 1-phosphate-binding residues include E84, K88, R123, R127, and H166.

The protein belongs to the GLTP family.

The protein is ACD11 homolog protein of Arabidopsis thaliana (Mouse-ear cress).